Here is a 465-residue protein sequence, read N- to C-terminus: L-cystine uptake protein TcyP (465 aa).

10 helical membrane passes run 3-23, 34-54, 73-93, 105-125, 184-204, 224-246, 263-283, 338-358, 370-390, and 394-414; these read LFLT…LFYM, VLLA…FFAP, YVRF…LSAF, ISAL…AIGI, PTSA…YLGV, AIIM…AIMT, FVLA…IILA, LSIG…VMIA, FILL…GVGG, and FAAI…GLLI.

This sequence belongs to the dicarboxylate/amino acid:cation symporter (DAACS) (TC 2.A.23) family.

The protein resides in the membrane. In terms of biological role, mediates uptake of L-cystine, the oxidized form of L-cysteine. The sequence is that of L-cystine uptake protein TcyP from Shouchella clausii (strain KSM-K16) (Alkalihalobacillus clausii).